Consider the following 229-residue polypeptide: MSQPRPLLSPPETEEQLLAQAQQLSGYTLGELAALAGLVTPENLKRDKGWIGVLLEIWLGASAGSKPEQDFAALGVELKTIPVDSLGRPLETTFVCVAPLTGNSGVTWETSHVRHKLKRVLWIPVEGERSIPLAKRRVGSPLLWSPNEEEDRQLREDWEELMDMIVLGQIERITARHGEYLQIRPKAANAKALTEAIGARGERILTLPRGFYLKKNFTSALLARHFLIQ.

The protein belongs to the MutH family.

It localises to the cytoplasm. Functionally, sequence-specific endonuclease that cleaves unmethylated GATC sequences. It is involved in DNA mismatch repair. The sequence is that of DNA mismatch repair protein MutH from Escherichia coli O45:K1 (strain S88 / ExPEC).